We begin with the raw amino-acid sequence, 186 residues long: Ribosome-recycling factor (186 aa).

This sequence belongs to the RRF family.

Its subcellular location is the cytoplasm. Responsible for the release of ribosomes from messenger RNA at the termination of protein biosynthesis. May increase the efficiency of translation by recycling ribosomes from one round of translation to another. The polypeptide is Ribosome-recycling factor (Prosthecochloris aestuarii (strain DSM 271 / SK 413)).